A 165-amino-acid chain; its full sequence is Lipoprotein signal peptidase (165 aa).

The next 2 membrane-spanning stretches (helical) occupy residues 64 to 84 and 88 to 108; these read LGRWLLVGVAVLAAAALGAWM and GSRLLVLSLGLIVGGAVGNAV. Active-site residues include aspartate 118 and aspartate 136. Residues 128–148 traverse the membrane as a helical segment; sequence SWYVFNVADAGIVAGVAGLLV.

This sequence belongs to the peptidase A8 family.

Its subcellular location is the cell inner membrane. It catalyses the reaction Release of signal peptides from bacterial membrane prolipoproteins. Hydrolyzes -Xaa-Yaa-Zaa-|-(S,diacylglyceryl)Cys-, in which Xaa is hydrophobic (preferably Leu), and Yaa (Ala or Ser) and Zaa (Gly or Ala) have small, neutral side chains.. The protein operates within protein modification; lipoprotein biosynthesis (signal peptide cleavage). Its function is as follows. This protein specifically catalyzes the removal of signal peptides from prolipoproteins. In Methylobacterium sp. (strain 4-46), this protein is Lipoprotein signal peptidase.